A 503-amino-acid polypeptide reads, in one-letter code: Probable DNA ligase (503 aa).

ATP is bound at residue glutamate 210. Lysine 212 serves as the catalytic N6-AMP-lysine intermediate. ATP-binding residues include arginine 217, arginine 232, glutamate 261, phenylalanine 296, arginine 367, and lysine 373.

Belongs to the ATP-dependent DNA ligase family. The cofactor is Mg(2+).

The catalysed reaction is ATP + (deoxyribonucleotide)n-3'-hydroxyl + 5'-phospho-(deoxyribonucleotide)m = (deoxyribonucleotide)n+m + AMP + diphosphate.. Its function is as follows. DNA ligase that seals nicks in double-stranded DNA during DNA replication, DNA recombination and DNA repair. In Rhodococcus opacus (strain B4), this protein is Probable DNA ligase.